The primary structure comprises 549 residues: CTP synthase (549 aa).

Residues 1 to 267 (MTKFVFVTGG…AAQVLSLLNL (267 aa)) form an amidoligase domain region. Ser13 lines the CTP pocket. Ser13 is a binding site for UTP. ATP-binding positions include 14 to 19 (SIGKGI) and Asp71. Mg(2+) contacts are provided by Asp71 and Glu141. CTP-binding positions include 148 to 150 (DIE), 188 to 193 (KTKPTQ), and Lys224. Residues 188-193 (KTKPTQ) and Lys224 contribute to the UTP site. The Glutamine amidotransferase type-1 domain maps to 292–534 (EIAIVGKYVR…VQAARTHSSD (243 aa)). Gly354 is an L-glutamine binding site. Residue Cys381 is the Nucleophile; for glutamine hydrolysis of the active site. Residues 382–385 (LGMQ), Glu405, and Arg462 contribute to the L-glutamine site. Catalysis depends on residues His507 and Glu509.

This sequence belongs to the CTP synthase family. As to quaternary structure, homotetramer.

It carries out the reaction UTP + L-glutamine + ATP + H2O = CTP + L-glutamate + ADP + phosphate + 2 H(+). The catalysed reaction is L-glutamine + H2O = L-glutamate + NH4(+). The enzyme catalyses UTP + NH4(+) + ATP = CTP + ADP + phosphate + 2 H(+). Its pathway is pyrimidine metabolism; CTP biosynthesis via de novo pathway; CTP from UDP: step 2/2. Allosterically activated by GTP, when glutamine is the substrate; GTP has no effect on the reaction when ammonia is the substrate. The allosteric effector GTP functions by stabilizing the protein conformation that binds the tetrahedral intermediate(s) formed during glutamine hydrolysis. Inhibited by the product CTP, via allosteric rather than competitive inhibition. In terms of biological role, catalyzes the ATP-dependent amination of UTP to CTP with either L-glutamine or ammonia as the source of nitrogen. Regulates intracellular CTP levels through interactions with the four ribonucleotide triphosphates. The chain is CTP synthase from Cyanothece sp. (strain PCC 7425 / ATCC 29141).